The sequence spans 514 residues: Polygalacturonase (514 aa).

An N-terminal signal peptide occupies residues 1 to 22 (MAMKFIAPMAFVAMQLIIMAAA). Positions 23 to 45 (EDQSAQIMLDSDIEQYLRSNRSL) are excised as a propeptide. 5 PbH1 repeats span residues 214–240 (CEGV…DIFA), 241–262 (SKNF…AIGT), 264–284 (SSNI…SIGS), 294–315 (VSYV…RIKT), and 323–344 (ASHI…LINQ). Asp255 functions as the Proton donor in the catalytic mechanism. His278 is a catalytic residue. Residues 434–514 (AKRKESKSHK…CSRHGKIYHP (81 aa)) constitute a propeptide that is removed on maturation. N-linked (GlcNAc...) asparagine glycosylation is found at Asn460 and Asn472.

Belongs to the glycosyl hydrolase 28 family.

The protein localises to the secreted. It is found in the plastid. The protein resides in the amyloplast. Its subcellular location is the cell wall. It catalyses the reaction (1,4-alpha-D-galacturonosyl)n+m + H2O = (1,4-alpha-D-galacturonosyl)n + (1,4-alpha-D-galacturonosyl)m.. The polypeptide is Polygalacturonase (Cryptomeria japonica (Japanese cedar)).